The chain runs to 559 residues: Potassium-transporting ATPase potassium-binding subunit (559 aa).

The next 13 helical transmembrane spans lie at 5–25 (GFLLIASFLLILLVLAKPLGS), 27–47 (LARLIAAVPLPGVAGVERILW), 63–83 (LLALLTLNLLGLGILFCLLFW), 132–152 (GLTVQNFLSAATGIAVVFALI), 170–190 (LVRITLWILFPVALIIALFFI), 253–273 (LAQMLAIFLIPAALCFAFGEA), 283–303 (LLWAMSFIFVVCVAVVMWAEV), 327–347 (FGVLASSLFAVVTTAASCGAV), 356–376 (ALGGMVPMWLMQIGEVVFGGV), 379–399 (GLYGMLLFVLLAVFIAGLMIG), 416–436 (MTALAILVTPMLVLLGSALAM), 484–504 (LLAFCMFVGRFGVIIPVMAIA), and 524–544 (GALFIGLLIGTVLLVGALTFI).

This sequence belongs to the KdpA family. As to quaternary structure, the system is composed of three essential subunits: KdpA, KdpB and KdpC.

It is found in the cell inner membrane. In terms of biological role, part of the high-affinity ATP-driven potassium transport (or Kdp) system, which catalyzes the hydrolysis of ATP coupled with the electrogenic transport of potassium into the cytoplasm. This subunit binds the periplasmic potassium ions and delivers the ions to the membrane domain of KdpB through an intramembrane tunnel. In Salmonella enteritidis PT4 (strain P125109), this protein is Potassium-transporting ATPase potassium-binding subunit.